A 360-amino-acid polypeptide reads, in one-letter code: Chorismate synthase (360 aa).

Residues 36–60 (LSEDDIQPDLDRRKPGTSKYTTPRR) form a disordered region. Arg-48 contacts NADP(+). Residues 125 to 127 (RSS), 246 to 247 (NA), Gly-286, 301 to 305 (KPTSS), and Arg-327 each bind FMN.

The protein belongs to the chorismate synthase family. Homotetramer. It depends on FMNH2 as a cofactor.

It catalyses the reaction 5-O-(1-carboxyvinyl)-3-phosphoshikimate = chorismate + phosphate. Its pathway is metabolic intermediate biosynthesis; chorismate biosynthesis; chorismate from D-erythrose 4-phosphate and phosphoenolpyruvate: step 7/7. Catalyzes the anti-1,4-elimination of the C-3 phosphate and the C-6 proR hydrogen from 5-enolpyruvylshikimate-3-phosphate (EPSP) to yield chorismate, which is the branch point compound that serves as the starting substrate for the three terminal pathways of aromatic amino acid biosynthesis. This reaction introduces a second double bond into the aromatic ring system. The sequence is that of Chorismate synthase from Histophilus somni (strain 129Pt) (Haemophilus somnus).